A 749-amino-acid polypeptide reads, in one-letter code: 1,4-alpha-glucan branching enzyme GlgB (749 aa).

D415 (nucleophile) is an active-site residue. E468 (proton donor) is an active-site residue.

The protein belongs to the glycosyl hydrolase 13 family. GlgB subfamily. In terms of assembly, monomer.

The catalysed reaction is Transfers a segment of a (1-&gt;4)-alpha-D-glucan chain to a primary hydroxy group in a similar glucan chain.. It functions in the pathway glycan biosynthesis; glycogen biosynthesis. Its function is as follows. Catalyzes the formation of the alpha-1,6-glucosidic linkages in glycogen by scission of a 1,4-alpha-linked oligosaccharide from growing alpha-1,4-glucan chains and the subsequent attachment of the oligosaccharide to the alpha-1,6 position. This is 1,4-alpha-glucan branching enzyme GlgB from Nitrosococcus oceani (strain ATCC 19707 / BCRC 17464 / JCM 30415 / NCIMB 11848 / C-107).